The chain runs to 204 residues: Arginine exporter protein ArgO (204 aa).

The next 6 membrane-spanning stretches (helical) occupy residues 1 to 21 (MWAV…PLGP), 37 to 57 (LMVA…GIFG), 67 to 87 (LLLG…GWGA), 111 to 131 (IIAT…DTFV), 154 to 174 (TASF…APWL), and 179 to 199 (VQRV…LQLA).

Belongs to the LysE/ArgO transporter (TC 2.A.75) family.

The protein resides in the cell inner membrane. It carries out the reaction L-arginine(in) = L-arginine(out). In terms of biological role, involved in the export of arginine. Important to control the intracellular level of arginine and the correct balance between arginine and lysine. The sequence is that of Arginine exporter protein ArgO from Pectobacterium atrosepticum (strain SCRI 1043 / ATCC BAA-672) (Erwinia carotovora subsp. atroseptica).